We begin with the raw amino-acid sequence, 190 residues long: DNA-invertase (190 aa).

The 134-residue stretch at 2 to 135 folds into the Resolvase/invertase-type recombinase catalytic domain; that stretch reads ATIGYIRVST…AGLAAARAQG (134 aa). Serine 10 acts as the O-(5'-phospho-DNA)-serine intermediate in catalysis. Residues 162–181 constitute a DNA-binding region (H-T-H motif); sequence RQQLAIIFGIGVSTLYRYFP.

The protein belongs to the site-specific recombinase resolvase family.

A DNA fragment of approximately 900 base pairs, adjacent to the fljB (H2) gene, which specifies the synthesis of phase-2 flagellin, can exist in either orientation with respect to fljB. The orientation of the inversion region controls expression of fljB. The hin gene occupies about two-thirds of the inversion region; it is required for the inversion of the fljB controlling region. The protein is DNA-invertase (hin) of Salmonella abortus-equi.